The chain runs to 201 residues: MSKHIAGPEIERLIQLLARIPGFGPRSARRAALYLIKKKETLLEPLGAAIQAAVDKVCICSVCGNVDTTDPCSICRDPRRDDTTIIVVEDVADLWALERARTLAARYHVLGGRLSPLDGIGPDELNITSLVQRVVQNPIMEIILAVNATVEGQTTAHYITDQLSNFSVKITRLAHGVPVGGELDYLDDGTLAAALQARTNL.

Residues 60 to 75 (CSVCGNVDTTDPCSIC) form a C4-type zinc finger. The region spanning 83–178 (TTIIVVEDVA…KITRLAHGVP (96 aa)) is the Toprim domain.

It belongs to the RecR family.

In terms of biological role, may play a role in DNA repair. It seems to be involved in an RecBC-independent recombinational process of DNA repair. It may act with RecF and RecO. The polypeptide is Recombination protein RecR (Bartonella quintana (strain Toulouse) (Rochalimaea quintana)).